Reading from the N-terminus, the 554-residue chain is Phenylalanine--tRNA ligase beta subunit (554 aa).

Residues 276–351 form the B5 domain; the sequence is LTLKSRIISI…INYGYEKFEG (76 aa). Mg(2+)-binding residues include Asp-329, Asp-335, Glu-338, and Glu-339.

Belongs to the phenylalanyl-tRNA synthetase beta subunit family. Type 2 subfamily. In terms of assembly, tetramer of two alpha and two beta subunits. The cofactor is Mg(2+).

Its subcellular location is the cytoplasm. The catalysed reaction is tRNA(Phe) + L-phenylalanine + ATP = L-phenylalanyl-tRNA(Phe) + AMP + diphosphate + H(+). The protein is Phenylalanine--tRNA ligase beta subunit of Methanococcus maripaludis (strain C7 / ATCC BAA-1331).